Consider the following 306-residue polypeptide: N-acetylmuramic acid 6-phosphate etherase (306 aa).

An SIS domain is found at 59-222 (TSQALAKGGR…STGTMVMLGK (164 aa)). The Proton donor role is filled by glutamate 87. Residue glutamate 118 is part of the active site.

The protein belongs to the GCKR-like family. MurNAc-6-P etherase subfamily. Homodimer.

It carries out the reaction N-acetyl-D-muramate 6-phosphate + H2O = N-acetyl-D-glucosamine 6-phosphate + (R)-lactate. It functions in the pathway amino-sugar metabolism; N-acetylmuramate degradation. Its function is as follows. Specifically catalyzes the cleavage of the D-lactyl ether substituent of MurNAc 6-phosphate, producing GlcNAc 6-phosphate and D-lactate. This is N-acetylmuramic acid 6-phosphate etherase from Microcystis aeruginosa (strain NIES-843 / IAM M-2473).